A 337-amino-acid polypeptide reads, in one-letter code: Large ribosomal subunit protein uL3 (337 aa).

The tract at residues 1-20 is disordered; that stretch reads MASIHRPKRGSLAFSPRKRA.

Belongs to the universal ribosomal protein uL3 family. In terms of assembly, part of the 50S ribosomal subunit. Forms a cluster with proteins L14 and L24e.

Functionally, one of the primary rRNA binding proteins, it binds directly near the 3'-end of the 23S rRNA, where it nucleates assembly of the 50S subunit. In Methanosarcina mazei (strain ATCC BAA-159 / DSM 3647 / Goe1 / Go1 / JCM 11833 / OCM 88) (Methanosarcina frisia), this protein is Large ribosomal subunit protein uL3.